The chain runs to 237 residues: D-aminoacyl-tRNA deacylase (237 aa).

It belongs to the DtdA deacylase family. As to quaternary structure, monomer. Zn(2+) is required as a cofactor.

It catalyses the reaction a D-aminoacyl-tRNA + H2O = a tRNA + a D-alpha-amino acid + H(+). It carries out the reaction glycyl-tRNA(Ala) + H2O = tRNA(Ala) + glycine + H(+). Functionally, D-aminoacyl-tRNA deacylase with broad substrate specificity. By recycling D-aminoacyl-tRNA to D-amino acids and free tRNA molecules, this enzyme counteracts the toxicity associated with the formation of D-aminoacyl-tRNA entities in vivo. This chain is D-aminoacyl-tRNA deacylase, found in Sulfurisphaera tokodaii (strain DSM 16993 / JCM 10545 / NBRC 100140 / 7) (Sulfolobus tokodaii).